The chain runs to 353 residues: MKFLDEAKVYIRSGDGGNGCVAFRREKFIEFGGPNGGNGGRGGDIIVEAADGLNTLIDYRYQQHFKAQKGGNGMGSDRHGAGGKDIVMKVPVGTQIFDEDKETLIHDFTKVGERFVLAKGGNGGFGNAHFKSSTNRAPRHANPGLPGEERWIWLRLKLIADAGLVGLPNAGKSTFLSKVSAAKPKIADYPFTTLHPQLGVVNSDGREFVLADIPGLIEGAHEGAGLGDRFLGHIERCRVLLHLIDATCEHAGKAYKTVRGELEAYAETLVDKIEIVALNKIDAVEPDELKKQKDRLKRAAKKTPLLLSGVTGQGVPEVLRALVAVIGEAPVSDKAIGTADNPAEAKPWAPQDA.

In terms of domain architecture, Obg spans 1–159 (MKFLDEAKVY…RWIWLRLKLI (159 aa)). The region spanning 160 to 327 (ADAGLVGLPN…VLRALVAVIG (168 aa)) is the OBG-type G domain. Residues 166–173 (GLPNAGKS), 191–195 (FTTLH), 212–215 (DIPG), 279–282 (NKID), and 308–310 (SGV) contribute to the GTP site. Positions 173 and 193 each coordinate Mg(2+).

It belongs to the TRAFAC class OBG-HflX-like GTPase superfamily. OBG GTPase family. As to quaternary structure, monomer. Mg(2+) is required as a cofactor.

It localises to the cytoplasm. In terms of biological role, an essential GTPase which binds GTP, GDP and possibly (p)ppGpp with moderate affinity, with high nucleotide exchange rates and a fairly low GTP hydrolysis rate. Plays a role in control of the cell cycle, stress response, ribosome biogenesis and in those bacteria that undergo differentiation, in morphogenesis control. This chain is GTPase Obg, found in Rhodopseudomonas palustris (strain TIE-1).